Reading from the N-terminus, the 470-residue chain is MPSPATTWLHVSGYRFLLRRIECALLFGDVCAATGALRARTTSLALGCVLAIVAAMGCAFVALLRPQSALGQAPIVMGRESGALYVRVDDVWHPVLNLASARLIAATNANPQPVSESELGHTKRGPLLGIPGAPQLLDQPLAGAESAWAICDSDNGGSTTVVVGPAEDSSAQVLTAEQMILVATESGSPTYLLYGGRRAVVDLADPAVVWALRLQGRVPHVVAQSLLNAVPEAPRITAPRIRGGGRASVGLPGFLVGGVVRITRASGDEYYVVLEDGVQRIGQVAADLLRFGDSQGSVNVPTVAPDVIRVAPIVNTLPVSAFPDRPPTPVDGSPGRAVTTLCVTWTPAQPGAARVAFLAGSGPPVPLGGVPVTLAQADGRGPALDAVYLPPGRSAYVAARSLSGGGTGTRYLVTDTGVRFAIHDDDVAHDLGLPTAAIPAPWPVLATLPSGPELSRANASVARDTVAPGP.

A helical membrane pass occupies residues 44 to 64 (LALGCVLAIVAAMGCAFVALL).

The protein belongs to the EccB family. In terms of assembly, part of the ESX-4 / type VII secretion system (T7SS), which is composed of cytosolic and membrane components.

Its subcellular location is the cell membrane. Functionally, an ATPase. The protein is ESX-4 secretion system ATPase EccB4 (eccB4) of Mycobacterium tuberculosis (strain CDC 1551 / Oshkosh).